We begin with the raw amino-acid sequence, 120 residues long: Large ribosomal subunit protein uL22 (120 aa).

It belongs to the universal ribosomal protein uL22 family. Part of the 50S ribosomal subunit.

Its function is as follows. This protein binds specifically to 23S rRNA; its binding is stimulated by other ribosomal proteins, e.g. L4, L17, and L20. It is important during the early stages of 50S assembly. It makes multiple contacts with different domains of the 23S rRNA in the assembled 50S subunit and ribosome. Functionally, the globular domain of the protein is located near the polypeptide exit tunnel on the outside of the subunit, while an extended beta-hairpin is found that lines the wall of the exit tunnel in the center of the 70S ribosome. The polypeptide is Large ribosomal subunit protein uL22 (Corynebacterium glutamicum (strain R)).